Reading from the N-terminus, the 161-residue chain is Putative 4-hydroxy-4-methyl-2-oxoglutarate aldolase (161 aa).

Residues 75–78 and Arg97 contribute to the substrate site; that span reads GDQL. An a divalent metal cation-binding site is contributed by Asp98.

It belongs to the class II aldolase/RraA-like family. Homotrimer. A divalent metal cation is required as a cofactor.

It carries out the reaction 4-hydroxy-4-methyl-2-oxoglutarate = 2 pyruvate. The catalysed reaction is oxaloacetate + H(+) = pyruvate + CO2. Catalyzes the aldol cleavage of 4-hydroxy-4-methyl-2-oxoglutarate (HMG) into 2 molecules of pyruvate. Also contains a secondary oxaloacetate (OAA) decarboxylase activity due to the common pyruvate enolate transition state formed following C-C bond cleavage in the retro-aldol and decarboxylation reactions. The protein is Putative 4-hydroxy-4-methyl-2-oxoglutarate aldolase of Vibrio cholerae serotype O1 (strain ATCC 39315 / El Tor Inaba N16961).